Consider the following 183-residue polypeptide: uncharacterized protein (183 aa).

Lys-21 participates in a covalent cross-link: Glycyl lysine isopeptide (Lys-Gly) (interchain with G-Cter in ubiquitin). Disordered regions lie at residues 24 to 111 (NTTT…QNDN) and 160 to 183 (PQSI…TRRP). Low complexity predominate over residues 99 to 108 (QQQQQQQQQQ). Polar residues predominate over residues 170–183 (LPPSNASNTTTRRP).

The protein localises to the cytoplasm. This is an uncharacterized protein from Saccharomyces cerevisiae (strain ATCC 204508 / S288c) (Baker's yeast).